Consider the following 305-residue polypeptide: Orotidine 5'-phosphate decarboxylase (305 aa).

The active-site Proton donor is the lysine 108.

The protein belongs to the OMP decarboxylase family. Type 2 subfamily.

It carries out the reaction orotidine 5'-phosphate + H(+) = UMP + CO2. It functions in the pathway pyrimidine metabolism; UMP biosynthesis via de novo pathway; UMP from orotate: step 2/2. In Caldicellulosiruptor bescii (strain ATCC BAA-1888 / DSM 6725 / KCTC 15123 / Z-1320) (Anaerocellum thermophilum), this protein is Orotidine 5'-phosphate decarboxylase.